The chain runs to 257 residues: Outer membrane protein Omp26La (257 aa).

Residues 1–19 (MKKIALFITASLIAGNTLA) form the signal peptide.

This sequence belongs to the MipA/OmpV family.

The protein resides in the cell outer membrane. This chain is Outer membrane protein Omp26La, found in Vibrio anguillarum (Listonella anguillarum).